Reading from the N-terminus, the 208-residue chain is 3-isopropylmalate dehydratase small subunit (208 aa).

It belongs to the LeuD family. LeuD type 1 subfamily. Heterodimer of LeuC and LeuD.

The catalysed reaction is (2R,3S)-3-isopropylmalate = (2S)-2-isopropylmalate. The protein operates within amino-acid biosynthesis; L-leucine biosynthesis; L-leucine from 3-methyl-2-oxobutanoate: step 2/4. Its function is as follows. Catalyzes the isomerization between 2-isopropylmalate and 3-isopropylmalate, via the formation of 2-isopropylmaleate. In Granulibacter bethesdensis (strain ATCC BAA-1260 / CGDNIH1), this protein is 3-isopropylmalate dehydratase small subunit.